Consider the following 238-residue polypeptide: Ribonuclease PH (238 aa).

Phosphate-binding positions include R86 and 124–126 (GTR).

This sequence belongs to the RNase PH family. In terms of assembly, homohexameric ring arranged as a trimer of dimers.

It carries out the reaction tRNA(n+1) + phosphate = tRNA(n) + a ribonucleoside 5'-diphosphate. Its function is as follows. Phosphorolytic 3'-5' exoribonuclease that plays an important role in tRNA 3'-end maturation. Removes nucleotide residues following the 3'-CCA terminus of tRNAs; can also add nucleotides to the ends of RNA molecules by using nucleoside diphosphates as substrates, but this may not be physiologically important. Probably plays a role in initiation of 16S rRNA degradation (leading to ribosome degradation) during starvation. The chain is Ribonuclease PH from Acinetobacter baylyi (strain ATCC 33305 / BD413 / ADP1).